The following is a 346-amino-acid chain: L-threonine dehydratase catabolic TdcB (346 aa).

An AMP-binding site is contributed by 59–60; that stretch reads FT. The residue at position 64 (Lys64) is an N6-(pyridoxal phosphate)lysine. Residues Gln94, 125-126, and Asn321 contribute to the AMP site; that span reads GY.

The protein belongs to the serine/threonine dehydratase family. In the native structure, TdcB is in a dimeric form, whereas in the TdcB-AMP complex, it exists in a tetrameric form (dimer of dimers). Pyridoxal 5'-phosphate serves as cofactor.

It carries out the reaction L-threonine = 2-oxobutanoate + NH4(+). It functions in the pathway amino-acid degradation; L-threonine degradation via propanoate pathway; propanoate from L-threonine: step 1/4. Its activity is regulated as follows. Each protein molecule can bind up to four molecules of AMP, which act as an allosteric activator to the enzyme. Functionally, catalyzes the anaerobic formation of alpha-ketobutyrate and ammonia from threonine in a two-step reaction. The first step involved a dehydration of threonine and a production of enamine intermediates (aminocrotonate), which tautomerizes to its imine form (iminobutyrate). Both intermediates are unstable and short-lived. The second step is the nonenzymatic hydrolysis of the enamine/imine intermediates to form 2-ketobutyrate and free ammonia. In the low water environment of the cell, the second step is accelerated by RidA. The polypeptide is L-threonine dehydratase catabolic TdcB (tdcB) (Staphylococcus aureus (strain USA300)).